A 206-amino-acid chain; its full sequence is Synaptosomal-associated protein 25 (206 aa).

Positions 1-20 (MAEDADMRNELEEMQRRADQ) are enriched in basic and acidic residues. Positions 1-25 (MAEDADMRNELEEMQRRADQLADES) are disordered. The segment at 1–75 (MAEDADMRNE…QINKDMKEAE (75 aa)) is interaction with CENPF. Residues 19–81 (DQLADESLES…KEAEKNSTDL (63 aa)) enclose the t-SNARE coiled-coil homology 1 domain. 4 S-palmitoyl cysteine lipidation sites follow: C85, C88, C90, and C92. Residues 111-120 (GVVASQPARV) are interaction with ZDHHC17. T138 bears the Phosphothreonine mark. The t-SNARE coiled-coil homology 2 domain maps to 140–202 (DARENEMDEN…DEANQRATKM (63 aa)). 2 positions are modified to phosphoserine: S154 and S187.

Belongs to the SNAP-25 family. As to quaternary structure, part of the SNARE core complex containing SNAP25, VAMP2 and STX1A; this complex binds CPLX1. Found in a complex containing SYT1, SV2B and syntaxin-1. Found in a ternary complex with STX1A and VAMP8. Interacts with HSC70 and with SYT9, forming a complex with DNAJC5. The interaction with SYT9 is inhibited in presence of calcium. Isoform 1 and isoform 2 interact with BLOC1S6. Interacts with CENPF. Interacts with EQTN. Interacts with HGS. Interacts with KCNB1 (via N-terminus); reduces the voltage-dependent potassium channel KCNB1 activity in pancreatic beta cells. Interacts with OTOF. Interacts with RIMS1. Interacts with SNAPIN. Interacts with STXBP6. Interacts with TRIM9. Interacts with ZDHHC13 (via ANK repeats). Interacts with ZDHHC17 (via ANK repeats). Associates with the BLOC-1 complex. Interacts with PLCL1 (via C2 domain). Interacts with PRRT2; this interaction may impair the formation of the SNARE complex. Interacts with alpha-synuclein/SNCA. Interacts with PRPH2. Interacts with ROM1. Interacts with STX3. In terms of processing, palmitoylated. Cys-85 appears to be the main site, and palmitoylation is required for membrane association.

It localises to the cytoplasm. It is found in the perinuclear region. The protein localises to the cell membrane. The protein resides in the synapse. Its subcellular location is the synaptosome. It localises to the photoreceptor inner segment. Its function is as follows. t-SNARE involved in the molecular regulation of neurotransmitter release. May play an important role in the synaptic function of specific neuronal systems. Associates with proteins involved in vesicle docking and membrane fusion. Regulates plasma membrane recycling through its interaction with CENPF. Modulates the gating characteristics of the delayed rectifier voltage-dependent potassium channel KCNB1 in pancreatic beta cells. The protein is Synaptosomal-associated protein 25 (SNAP25) of Pongo abelii (Sumatran orangutan).